We begin with the raw amino-acid sequence, 252 residues long: Chaplin-A (252 aa).

A signal peptide spans 1–20; that stretch reads MVAAAAATGILSLCGSPALA. Positions 31–71 constitute a Chaplin 1 domain; the sequence is SPGAVSGNALQVPVDVPVNACGNTVDVIAALNPAFGNECEN. Disordered stretches follow at residues 71-121 and 150-224; these read NASD…GNNA and CEND…GSEG. Residues 86–108 are compositionally biased toward low complexity; it reads EDASSSSSSSTSASSSGSHADGA. Residues 112-152 form the Chaplin 2 domain; sequence SPGVGSGNNAQVPVDVPVNLCGNTVDVIAALNPVFGNKCEN. Residues 153–165 show a composition bias toward acidic residues; sequence DAEEPPGYGEEEP. The span at 210–224 shows a compositional bias: low complexity; sequence QTEQPPALAETGSEG. The short motif at 217-221 is the LPXTG sorting signal element; it reads LAETG. 2 consecutive propeptides (removed by sortase) follow at residues 219–252 and 221–252; these read ETGS…LSGR and GSEG…LSGR. Thr-220 bears the Pentaglycyl murein peptidoglycan amidated threonine mark.

Belongs to the chaplin family. Long chaplin subfamily.

It localises to the secreted. The protein resides in the cell wall. In terms of biological role, one of 8 partially redundant surface-active proteins required for efficient formation of aerial mycelium; the short chaplins assemble into a hydrophobic, amyloidal fibrillar surface layer that envelopes and protects aerial hyphae and spores, presumably anchored to the long chaplins. Chaplins have an overlapping function with the surface-active SapB peptide; chaplins are essential on minimal medium while on rich medium both chaplins and SapB are required for efficient aerial hyphae formation. A minimal chaplin strain capable of forming aerial mycelium/hyphae on minimal medium contains ChpC, ChpE and ChpH. The strain also has restored rodlet formation on the hyphae surface. A second minimal chaplin strain with ChpA, ChpD and ChpE makes slightly less robust hyphae. The long chaplins (ChpA, ChpB, ChpC) are not absolutely necessary for short chaplin localization or rodlet formation, but probably play a role in initiating aerial hyphae development. Chaplins are also involved in cell attachment to a hydrophobic surface. The protein is Chaplin-A of Streptomyces coelicolor (strain ATCC BAA-471 / A3(2) / M145).